A 72-amino-acid chain; its full sequence is Translation initiation factor IF-1 (72 aa).

Residues 1 to 72 enclose the S1-like domain; sequence MAKEGAIEVE…TRGRIVYRYK (72 aa).

The protein belongs to the IF-1 family. In terms of assembly, component of the 30S ribosomal translation pre-initiation complex which assembles on the 30S ribosome in the order IF-2 and IF-3, IF-1 and N-formylmethionyl-tRNA(fMet); mRNA recruitment can occur at any time during PIC assembly.

The protein localises to the cytoplasm. One of the essential components for the initiation of protein synthesis. Stabilizes the binding of IF-2 and IF-3 on the 30S subunit to which N-formylmethionyl-tRNA(fMet) subsequently binds. Helps modulate mRNA selection, yielding the 30S pre-initiation complex (PIC). Upon addition of the 50S ribosomal subunit IF-1, IF-2 and IF-3 are released leaving the mature 70S translation initiation complex. The protein is Translation initiation factor IF-1 of Corynebacterium diphtheriae (strain ATCC 700971 / NCTC 13129 / Biotype gravis).